A 252-amino-acid chain; its full sequence is MKTVTVKDLVIGTGAPKIIVSLMAKDIASVKSEALAYREADFDILEWRVDHYADLSNVESVMAAAKILRETMPEKPLLFTYRSAKEGGEQAISTEAYIALNRAAIDSGLVDMIDLELFTGDDQVKETVAYAHAHDVKVVMSNHDFHKTPEAEEIIARLRKMQSFDADIPKIALMPQSTSDVLTLLAATLEMQEQYADRPIITMSMAKTGVISRLAGEVFGSAATFGAVKKASAPGQISVNDLRTVLTILHQA.

3-dehydroquinate contacts are provided by residues Ser21, 46–48 (EWR), and Arg82. His143 serves as the catalytic Proton donor/acceptor. Catalysis depends on Lys170, which acts as the Schiff-base intermediate with substrate. Positions 213, 232, and 236 each coordinate 3-dehydroquinate.

The protein belongs to the type-I 3-dehydroquinase family. As to quaternary structure, homodimer.

The catalysed reaction is 3-dehydroquinate = 3-dehydroshikimate + H2O. It participates in metabolic intermediate biosynthesis; chorismate biosynthesis; chorismate from D-erythrose 4-phosphate and phosphoenolpyruvate: step 3/7. Its function is as follows. Involved in the third step of the chorismate pathway, which leads to the biosynthesis of aromatic amino acids. Catalyzes the cis-dehydration of 3-dehydroquinate (DHQ) and introduces the first double bond of the aromatic ring to yield 3-dehydroshikimate. The sequence is that of 3-dehydroquinate dehydratase from Escherichia coli O6:K15:H31 (strain 536 / UPEC).